Reading from the N-terminus, the 295-residue chain is Acetyl-coenzyme A carboxylase carboxyl transferase subunit beta (295 aa).

The interval 1 to 20 (MSWLSKLMPSGIRTENTPAK) is disordered. A CoA carboxyltransferase N-terminal domain is found at 28–295 (LWEKCSNCGS…QPHPQDADAA (268 aa)). C32, C35, C51, and C54 together coordinate Zn(2+). A C4-type zinc finger spans residues 32 to 54 (CSNCGSALYGPELEENLEVCPKC).

It belongs to the AccD/PCCB family. Acetyl-CoA carboxylase is a heterohexamer composed of biotin carboxyl carrier protein (AccB), biotin carboxylase (AccC) and two subunits each of ACCase subunit alpha (AccA) and ACCase subunit beta (AccD). Zn(2+) serves as cofactor.

The protein resides in the cytoplasm. The enzyme catalyses N(6)-carboxybiotinyl-L-lysyl-[protein] + acetyl-CoA = N(6)-biotinyl-L-lysyl-[protein] + malonyl-CoA. The protein operates within lipid metabolism; malonyl-CoA biosynthesis; malonyl-CoA from acetyl-CoA: step 1/1. In terms of biological role, component of the acetyl coenzyme A carboxylase (ACC) complex. Biotin carboxylase (BC) catalyzes the carboxylation of biotin on its carrier protein (BCCP) and then the CO(2) group is transferred by the transcarboxylase to acetyl-CoA to form malonyl-CoA. This is Acetyl-coenzyme A carboxylase carboxyl transferase subunit beta from Xanthomonas euvesicatoria pv. vesicatoria (strain 85-10) (Xanthomonas campestris pv. vesicatoria).